The primary structure comprises 239 residues: Cell number regulator 6 (239 aa).

Over residues 1 to 10 (MAEDATSSHP) the composition is skewed to polar residues. The interval 1–33 (MAEDATSSHPSRYVKLTKDQDAPAEDIRPGELN) is disordered. The span at 16 to 29 (LTKDQDAPAEDIRP) shows a compositional bias: basic and acidic residues. A run of 2 helical transmembrane segments spans residues 107 to 127 (CVCH…TAIF) and 136 to 156 (FLIG…TGIF).

This sequence belongs to the cornifelin family. Expressed in roots, leaves, stalks, apical meristems, immature ears, endosperm, pericarp and tassel spikelets.

The protein resides in the membrane. The sequence is that of Cell number regulator 6 (CNR6) from Zea mays (Maize).